A 200-amino-acid chain; its full sequence is 6,7-dimethyl-8-ribityllumazine synthase (200 aa).

5-amino-6-(D-ribitylamino)uracil-binding positions include Trp-25, 59–61, and 119–121; these read SWE and VLI. Position 124 to 125 (124 to 125) interacts with (2S)-2-hydroxy-3-oxobutyl phosphate; that stretch reads ET. The active-site Proton donor is the His-127. Phe-152 is a binding site for 5-amino-6-(D-ribitylamino)uracil. A (2S)-2-hydroxy-3-oxobutyl phosphate-binding site is contributed by Arg-166.

This sequence belongs to the DMRL synthase family. Homopentamer.

It carries out the reaction (2S)-2-hydroxy-3-oxobutyl phosphate + 5-amino-6-(D-ribitylamino)uracil = 6,7-dimethyl-8-(1-D-ribityl)lumazine + phosphate + 2 H2O + H(+). The protein operates within cofactor biosynthesis; riboflavin biosynthesis; riboflavin from 2-hydroxy-3-oxobutyl phosphate and 5-amino-6-(D-ribitylamino)uracil: step 1/2. In terms of biological role, catalyzes the formation of 6,7-dimethyl-8-ribityllumazine by condensation of 5-amino-6-(D-ribitylamino)uracil with 3,4-dihydroxy-2-butanone 4-phosphate. This is the penultimate step in the biosynthesis of riboflavin. The sequence is that of 6,7-dimethyl-8-ribityllumazine synthase from Pyricularia oryzae (strain 70-15 / ATCC MYA-4617 / FGSC 8958) (Rice blast fungus).